The primary structure comprises 329 residues: MGSLGEEPQVAEDCMGLLQLLSNGTVLRSESIDLITQQIPFKNNQTVLFKDSIYHKPNNLHLRLYKPISASNRTALPVVVFFHGGGFCFGSRSWPHFHNFCLTLASSLNALVVSPDYRLAPEHRLPAAFEDAEAVLTWLWDQAVSDGVNHWFEDGTDVDFDRVFVVGDSSGGNIAHQLAVRFGSGSIELTPVRVRGYVLMGPFFGGEERTNSENGPSEALLSLDLLDKFWRLSLPNGATRDHHMANPFGPTSPTLESISLEPMLVIVGGSELLRDRAKEYAYKLKKMGGKRVDYIEFENKEHGFYSNYPSSEAAEQVLRIIGDFMNNLS.

An Involved in the stabilization of the negatively charged intermediate by the formation of the oxyanion hole motif is present at residues 83–85 (HGG). The (-)-2'-epi-GR24 site is built by Gly-85, Gly-86, Ser-169, and Ser-170. The Nucleophile role is filled by Ser-169. Catalysis depends on residues Glu-271 and His-302.

This sequence belongs to the 'GDXG' lipolytic enzyme family. As to expression, expressed in axillary buds, leaves, stems, hypocotyls, flowers, siliques, and vasculatures of shoots and roots.

The protein localises to the nucleus. The protein resides in the cytoplasm. Its subcellular location is the cytosol. It carries out the reaction (-)-2'-epi-GR24 + H2O = (-)-2'-epi-GR24 ABC-rings + 5-hydroxy-3-methylfuran-2(5H)-one. It catalyses the reaction 5-deoxystrigol + H2O = 5-deoxystrigol ABC-rings + 5-hydroxy-3-methylfuran-2(5H)-one. The enzyme catalyses orobanchol + H2O = orobanchol ABC-rings + 5-hydroxy-3-methylfuran-2(5H)-one. Binds to strigolactones (SLs) such as (-)-2'-epi-GR24(4DO), 5-deoxystrigol (5DS) and orobanchol, and catalyzes their hydrolysis; SL are phytohormones controlling shoot branching and communications between plants and microorganisms. Promotes shoot branching by dampening SL-inhibited axillary bud outgrowth. In Arabidopsis thaliana (Mouse-ear cress), this protein is Strigolactones hydrolase CXE15.